We begin with the raw amino-acid sequence, 303 residues long: Acetaldehyde dehydrogenase (303 aa).

The active-site Acyl-thioester intermediate is the Cys-131. NAD(+) is bound by residues Ser-162–Asn-170 and Asn-273.

It belongs to the acetaldehyde dehydrogenase family.

It carries out the reaction acetaldehyde + NAD(+) + CoA = acetyl-CoA + NADH + H(+). The protein is Acetaldehyde dehydrogenase of Marinomonas sp. (strain MWYL1).